The following is a 426-amino-acid chain: Protein BTN1 (426 aa).

A signal peptide spans 1 to 32 (MFIISETQRTFASFFIFGLLNNILYVIILSAA). 10 helical membrane passes run 44-64 (IVLL…PFFI), 67-87 (VPYI…MVLI), 99-119 (ILGI…FLQL), 129-149 (IGGF…LFMV), 154-174 (MGFP…GFII), 243-263 (ITPL…SEYV), 290-310 (IYVV…SSVT), 318-338 (LYLL…QSIY), 340-360 (LPFH…LLGG), and 384-404 (GCVS…NWWL).

This sequence belongs to the battenin family.

It is found in the vacuole membrane. Functionally, involved in vacuolar transport and vacuole pH homeostasis. Also required for cytokinesis. This is Protein BTN1 (BTN1) from Candida albicans (strain SC5314 / ATCC MYA-2876) (Yeast).